An 86-amino-acid chain; its full sequence is Weak neurotoxin 10 (86 aa).

An N-terminal signal peptide occupies residues 1 to 21 (MKTLLLTLVVVTIVCLDLGYT). 5 disulfides stabilise this stretch: C24-C45, C27-C32, C38-C63, C67-C78, and C79-C84.

Belongs to the three-finger toxin family. Ancestral subfamily. Orphan group II sub-subfamily. Expressed by the venom gland.

The protein localises to the secreted. Its function is as follows. Binds with low affinity to muscular (alpha-1-beta-1-delta-epsilon/CHRNA1-CHRNB1-CHRND-CHRNE) and very low affinity to neuronal (alpha-7/CHRNA7) nicotinic acetylcholine receptor (nAChR). The protein is Weak neurotoxin 10 (WNTX10) of Naja sputatrix (Malayan spitting cobra).